The primary structure comprises 441 residues: Proline--tRNA ligase (441 aa).

The protein belongs to the class-II aminoacyl-tRNA synthetase family. ProS type 2 subfamily. In terms of assembly, homodimer.

Its subcellular location is the cytoplasm. It catalyses the reaction tRNA(Pro) + L-proline + ATP = L-prolyl-tRNA(Pro) + AMP + diphosphate. Functionally, catalyzes the attachment of proline to tRNA(Pro) in a two-step reaction: proline is first activated by ATP to form Pro-AMP and then transferred to the acceptor end of tRNA(Pro). This is Proline--tRNA ligase from Methylorubrum populi (strain ATCC BAA-705 / NCIMB 13946 / BJ001) (Methylobacterium populi).